A 126-amino-acid chain; its full sequence is C2H2-type zinc-finger transcription factor M5 (126 aa).

2 disordered regions span residues 17-52 (AQPDFEDWGDLGDLMPDVLPESNGSSSGTATDNDNR) and 103-126 (EKKSCNRVRRYSNGRERPRPRVKD). Residues 38-48 (SNGSSSGTATD) show a composition bias toward polar residues. Residues 51–76 (NRCWDHGCNGKKFLNHSNLVRHRREN) form a C2H2-type 1; degenerate zinc finger. Residues 83 to 115 (FTCPMCGAYFSRSTARNQHLEKKSCNRVRRYSN) form a C2H2-type 2; degenerate zinc finger. The segment covering 115-126 (NGRERPRPRVKD) has biased composition (basic and acidic residues).

This sequence belongs to the GLI C2H2-type zinc-finger protein family.

Its subcellular location is the nucleus. Its function is as follows. Transcription factor that probably regulates the expression of the gene cluster that mediates the biosynthesis of squalestatin S1 (SQS1, also known as zaragozic acid A), a heavily oxidized fungal polyketide that offers potent cholesterol lowering activity by targeting squalene synthase (SS). In Phoma sp. (strain ATCC 20986 / MF5453), this protein is C2H2-type zinc-finger transcription factor M5.